The following is a 297-amino-acid chain: Ribosomal RNA small subunit methyltransferase A (297 aa).

Asn-31, Leu-33, Gly-58, Glu-79, Asp-104, and Asn-129 together coordinate S-adenosyl-L-methionine.

This sequence belongs to the class I-like SAM-binding methyltransferase superfamily. rRNA adenine N(6)-methyltransferase family. RsmA subfamily.

The protein localises to the cytoplasm. The catalysed reaction is adenosine(1518)/adenosine(1519) in 16S rRNA + 4 S-adenosyl-L-methionine = N(6)-dimethyladenosine(1518)/N(6)-dimethyladenosine(1519) in 16S rRNA + 4 S-adenosyl-L-homocysteine + 4 H(+). In terms of biological role, specifically dimethylates two adjacent adenosines (A1518 and A1519) in the loop of a conserved hairpin near the 3'-end of 16S rRNA in the 30S particle. May play a critical role in biogenesis of 30S subunits. The chain is Ribosomal RNA small subunit methyltransferase A from Staphylococcus aureus (strain Newman).